Here is a 752-residue protein sequence, read N- to C-terminus: Lid2 complex component jmj3 (752 aa).

A JmjN domain is found at 34–75; the sequence is IPVVEPKISEFVDMESFIRRVERLGKKYGAIKVVRPSSVLNP. Positions 162 to 333 constitute a JmjC domain; sequence YTNRPSIPFY…NYEFSNLRRL (172 aa). Composition is skewed to polar residues over residues 391–402 and 409–423; these read SFSQRDFDSPNS and LMSN…HFNS. Residues 391–438 form a disordered region; sequence SFSQRDFDSPNSINPPSPLMSNHESASTEHFNSTTTTEKELSSLHVGE. The span at 427–438 shows a compositional bias: basic and acidic residues; that stretch reads TEKELSSLHVGE.

Component of the Lid2 complex composed of ash2, jmj3, lid2, sdc1 and snt2.

Its subcellular location is the nucleus. The sequence is that of Lid2 complex component jmj3 from Schizosaccharomyces pombe (strain 972 / ATCC 24843) (Fission yeast).